The primary structure comprises 102 residues: Thioredoxin (102 aa).

A Thioredoxin domain is found at Met1–Ala102. Cysteines 28 and 31 form a disulfide.

It belongs to the thioredoxin family.

Its function is as follows. Participates in various redox reactions through the reversible oxidation of its active center dithiol to a disulfide and catalyzes dithiol-disulfide exchange reactions. This is Thioredoxin (trxA) from Chlamydia pneumoniae (Chlamydophila pneumoniae).